The chain runs to 303 residues: Small ribosomal subunit protein uS2 (303 aa).

The tract at residues 258 to 303 (ATLRENAVVTENEVKKTDEEEGASSEAARADAQNEEAVAKPGEEVE) is disordered. Positions 294 to 303 (AVAKPGEEVE) are enriched in basic and acidic residues.

It belongs to the universal ribosomal protein uS2 family.

This chain is Small ribosomal subunit protein uS2, found in Bifidobacterium animalis subsp. lactis (strain AD011).